The following is a 440-amino-acid chain: Beta-1,3-galactosyl-O-glycosyl-glycoprotein beta-1,6-N-acetylglucosaminyltransferase (440 aa).

Over 1-9 the chain is Cytoplasmic; it reads MKMAGWKKK. The chain crosses the membrane as a helical; Signal-anchor for type II membrane protein span at residues 10-30; it reads LCPGHHLWALGCYMLLAVVSL. Residues 31–440 lie on the Lumenal side of the membrane; it reads RLSLRFKCDV…RHKAIYGTEL (410 aa). 2 N-linked (GlcNAc...) asparagine; by host glycosylation sites follow: Asn72 and Asn108. 4 cysteine pairs are disulfide-bonded: Cys73/Cys230, Cys164/Cys384, Cys185/Cys212, and Cys393/Cys425.

It belongs to the glycosyltransferase 14 family.

The protein localises to the host Golgi apparatus membrane. The enzyme catalyses a 3-O-[beta-D-galactosyl-(1-&gt;3)-N-acetyl-alpha-D-galactosaminyl]-L-seryl-[protein] + UDP-N-acetyl-alpha-D-glucosamine = 3-O-{beta-D-galactosyl-(1-&gt;3)-[N-acetyl-beta-D-glucosaminyl-(1-&gt;6)]-N-acetyl-alpha-D-galactosaminyl}-L-seryl-[protein] + UDP + H(+). The catalysed reaction is a 3-O-[beta-D-galactosyl-(1-&gt;3)-N-acetyl-alpha-D-galactosaminyl]-L-threonyl-[protein] + UDP-N-acetyl-alpha-D-glucosamine = a 3-O-{beta-D-galactosyl-(1-&gt;3)-[N-acetyl-beta-D-glucosaminyl-(1-&gt;6)]-N-acetyl-alpha-D-galactosaminyl}-L-threonyl-[protein] + UDP + H(+). It carries out the reaction a beta-D-Gal-(1-&gt;4)-beta-D-GlcNAc-(1-&gt;3)-beta-D-Gal-(1-&gt;4)-beta-D-GlcNAc derivative + UDP-N-acetyl-alpha-D-glucosamine = a beta-D-Gal-(1-&gt;4)-beta-D-GlcNAc-(1-&gt;3)-[beta-D-GlcNAc-(1-&gt;6)]-beta-D-Gal-(1-&gt;4)-N-acetyl-beta-D-glucosaminyl derivative + UDP + H(+). It catalyses the reaction 3-O-[N-acetyl-beta-D-glucosaminyl-(1-&gt;3)-N-acetyl-alpha-D-galactosaminyl]-L-seryl-[protein] + UDP-N-acetyl-alpha-D-glucosamine = 3-O-[N-acetyl-beta-D-glucosaminyl-(1-&gt;3)-[N-acetyl-beta-D-glucosaminyl-(1-&gt;6)]-N-acetyl-alpha-D-galactosaminyl]-L-seryl-[protein] + UDP + H(+). The enzyme catalyses a 3-O-[N-acetyl-beta-D-glucosaminyl-(1-&gt;3)-N-acetyl-alpha-D-galactosaminyl]-L-threonyl-[protein] + UDP-N-acetyl-alpha-D-glucosamine = 3-O-[N-acetyl-beta-D-glucosaminyl-(1-&gt;3)-[N-acetyl-beta-D-glucosaminyl-(1-&gt;6)]-N-acetyl-alpha-D-galactosaminyl]-L-threonyl-[protein] + UDP + H(+). Its pathway is protein modification; protein glycosylation. Functionally, non-essential glycosyltransferase that can synthesize all known mucin beta 6 N-acetylglucosaminides. Mediates core 2 and core 4 O-glycan branching, 2 important steps in mucin-type biosynthesis. Has also I-branching enzyme activity by converting linear into branched poly-N-acetyllactosaminoglycans. Contributes to the post-translational modifications of structural proteins. This chain is Beta-1,3-galactosyl-O-glycosyl-glycoprotein beta-1,6-N-acetylglucosaminyltransferase (Bo17), found in Bovine herpesvirus 4 (strain V. test) (BoHV-4).